The chain runs to 278 residues: ADP-dependent (S)-NAD(P)H-hydrate dehydratase (278 aa).

Residues 5-272 (TTEIVSRTII…TRIPTYMHRF (268 aa)) form the YjeF C-terminal domain. (6S)-NADPHX is bound by residues alanine 40, glycine 103, and histidine 152. Glycine 214 is an AMP binding site. Residue aspartate 215 coordinates (6S)-NADPHX.

It belongs to the NnrD/CARKD family. As to quaternary structure, homotetramer. It depends on Mg(2+) as a cofactor.

The catalysed reaction is (6S)-NADHX + ADP = AMP + phosphate + NADH + H(+). The enzyme catalyses (6S)-NADPHX + ADP = AMP + phosphate + NADPH + H(+). Its function is as follows. Catalyzes the dehydration of the S-form of NAD(P)HX at the expense of ADP, which is converted to AMP. Together with NAD(P)HX epimerase, which catalyzes the epimerization of the S- and R-forms, the enzyme allows the repair of both epimers of NAD(P)HX, a damaged form of NAD(P)H that is a result of enzymatic or heat-dependent hydration. The protein is ADP-dependent (S)-NAD(P)H-hydrate dehydratase of Lactiplantibacillus plantarum (strain ATCC BAA-793 / NCIMB 8826 / WCFS1) (Lactobacillus plantarum).